Here is a 37-residue protein sequence, read N- to C-terminus: Large ribosomal subunit protein bL36c (37 aa).

It belongs to the bacterial ribosomal protein bL36 family.

The protein resides in the plastid. The protein localises to the chloroplast. This chain is Large ribosomal subunit protein bL36c, found in Physcomitrium patens (Spreading-leaved earth moss).